The chain runs to 191 residues: Protein Ves (191 aa).

Belongs to the Ves family.

The chain is Protein Ves from Escherichia coli (strain UTI89 / UPEC).